A 205-amino-acid chain; its full sequence is Metalloproteinase inhibitor 1 (205 aa).

A signal peptide spans 1-24; sequence MMAPFASLASGILLLLSLIASSKA. Cys-25 is a Zn(2+) binding site. The tract at residues 25–28 is involved in metalloproteinase-binding; that stretch reads CSCA. 6 cysteine pairs are disulfide-bonded: Cys-25-Cys-94, Cys-27-Cys-123, Cys-37-Cys-148, Cys-151-Cys-197, Cys-156-Cys-161, and Cys-169-Cys-189. In terms of domain architecture, NTR spans 25–148; it reads CSCAPPHPQT…AFSKTYSAGC (124 aa). A glycan (N-linked (GlcNAc...) asparagine) is linked at Asn-54. The involved in metalloproteinase-binding stretch occupies residues 91-92; it reads ES. N-linked (GlcNAc...) asparagine glycosylation is present at Asn-102. Ser-179 is modified (phosphoserine).

Belongs to the protease inhibitor I35 (TIMP) family. As to quaternary structure, interacts with MMP1, MMP3, MMP10 and MMP13, but has only very low affinity for MMP14. Interacts with CD63; identified in a complex with CD63 and ITGB1. In terms of processing, the activity of TIMP1 is dependent on the presence of disulfide bonds. Post-translationally, N-glycosylated. In terms of tissue distribution, found in fetal and adult tissues. Highest levels are found in bone. Also found in lung, ovary and uterus.

Its subcellular location is the secreted. Metalloproteinase inhibitor that functions by forming one to one complexes with target metalloproteinases, such as collagenases, and irreversibly inactivates them by binding to their catalytic zinc cofactor. Acts on MMP1, MMP2, MMP3, MMP7, MMP8, MMP9, MMP10, MMP11, MMP12, MMP13 and MMP16. Does not act on MMP14. Also functions as a growth factor that regulates cell differentiation, migration and cell death and activates cellular signaling cascades via CD63 and ITGB1. Plays a role in integrin signaling. In Mus musculus (Mouse), this protein is Metalloproteinase inhibitor 1 (Timp1).